A 125-amino-acid polypeptide reads, in one-letter code: Small ribosomal subunit protein uS13 (125 aa).

The segment at 97–125 (PLRGQRTKTNARTRKGKRKTVANKKMASK) is disordered.

Belongs to the universal ribosomal protein uS13 family. As to quaternary structure, part of the 30S ribosomal subunit. Forms a loose heterodimer with protein S19. Forms two bridges to the 50S subunit in the 70S ribosome.

Functionally, located at the top of the head of the 30S subunit, it contacts several helices of the 16S rRNA. In the 70S ribosome it contacts the 23S rRNA (bridge B1a) and protein L5 of the 50S subunit (bridge B1b), connecting the 2 subunits; these bridges are implicated in subunit movement. Contacts the tRNAs in the A and P-sites. This Borrelia hermsii (strain HS1 / DAH) protein is Small ribosomal subunit protein uS13.